Consider the following 57-residue polypeptide: Large ribosomal subunit protein bL32 (57 aa).

The span at 1–19 (MATPKFKKSRANTHSRRSQ) shows a compositional bias: basic residues. Residues 1 to 20 (MATPKFKKSRANTHSRRSQW) form a disordered region.

The protein belongs to the bacterial ribosomal protein bL32 family.

The polypeptide is Large ribosomal subunit protein bL32 (Corynebacterium aurimucosum (strain ATCC 700975 / DSM 44827 / CIP 107346 / CN-1) (Corynebacterium nigricans)).